A 319-amino-acid polypeptide reads, in one-letter code: Bidirectional sugar transporter SWEET15 (319 aa).

At 1-10 (MAFMSMERST) the chain is on the extracellular side. Residues 11 to 31 (WAFTFGILGNLISLMVFLSPL) traverse the membrane as a helical segment. In terms of domain architecture, MtN3/slv 1 spans 13-99 (FTFGILGNLI…AMYLAYAPKS (87 aa)). At 32–50 (PTFYRVYRKKSTEGFQSTP) the chain is on the cytoplasmic side. Residues 51 to 71 (YVVTLFSCMLWMYYAFVKSGA) traverse the membrane as a helical segment. A topological domain (extracellular) is located at residue glutamate 72. The helical transmembrane segment at 73 to 93 (LLVTINGVGCVIETVYLAMYL) threads the bilayer. The Cytoplasmic portion of the chain corresponds to 94–106 (AYAPKSARMLTAK). A helical transmembrane segment spans residues 107-127 (MLLGLNIGLFGVIALVTLLLS). Residues 128 to 134 (RGELRVH) lie on the Extracellular side of the membrane. Residues 135–155 (VLGWICVAVSLSVFAAPLSII) form a helical membrane-spanning segment. The MtN3/slv 2 domain maps to 135-219 (VLGWICVAVS…ALYMAYRSKK (85 aa)). At 156–167 (RLVIRTKSVEFM) the chain is on the cytoplasmic side. A helical membrane pass occupies residues 168 to 188 (PFSLSFFLVLSAVIWFLYGLL). Residues 189 to 191 (KKD) are Extracellular-facing. The chain crosses the membrane as a helical span at residues 192–212 (VFVALPNVLGFVFGVAQMALY). Topologically, residues 213 to 319 (MAYRSKKPLV…KPDMAIVVEV (107 aa)) are cytoplasmic.

Belongs to the SWEET sugar transporter family. Forms homooligomers and/or heterooligomers.

It is found in the cell membrane. Its function is as follows. Mediates both low-affinity uptake and efflux of sugar across the plasma membrane. In terms of biological role, confers blight susceptibility. Confers TAL effector-mediated susceptibility to Xanthomonas oryzae pv. oryzae. This chain is Bidirectional sugar transporter SWEET15 (SWEET15), found in Oryza sativa subsp. japonica (Rice).